Reading from the N-terminus, the 308-residue chain is N-acetyl-gamma-glutamyl-phosphate reductase (308 aa).

C117 is an active-site residue.

It belongs to the NAGSA dehydrogenase family. Type 2 subfamily.

It localises to the cytoplasm. It catalyses the reaction N-acetyl-L-glutamate 5-semialdehyde + phosphate + NADP(+) = N-acetyl-L-glutamyl 5-phosphate + NADPH + H(+). It functions in the pathway amino-acid biosynthesis; L-arginine biosynthesis; N(2)-acetyl-L-ornithine from L-glutamate: step 3/4. Functionally, catalyzes the NADPH-dependent reduction of N-acetyl-5-glutamyl phosphate to yield N-acetyl-L-glutamate 5-semialdehyde. The sequence is that of N-acetyl-gamma-glutamyl-phosphate reductase from Sinorhizobium fredii (strain NBRC 101917 / NGR234).